We begin with the raw amino-acid sequence, 294 residues long: Cytidine deaminase (294 aa).

CMP/dCMP-type deaminase domains are found at residues 48–168 and 186–294; these read DEDA…FGPK and LTGD…VLLA. Position 89 to 91 (89 to 91) interacts with substrate; that stretch reads NME. His-102 contributes to the Zn(2+) binding site. Glu-104 functions as the Proton donor in the catalytic mechanism. Zn(2+)-binding residues include Cys-129 and Cys-132.

It belongs to the cytidine and deoxycytidylate deaminase family. Homodimer. Zn(2+) is required as a cofactor.

It catalyses the reaction cytidine + H2O + H(+) = uridine + NH4(+). The catalysed reaction is 2'-deoxycytidine + H2O + H(+) = 2'-deoxyuridine + NH4(+). This enzyme scavenges exogenous and endogenous cytidine and 2'-deoxycytidine for UMP synthesis. The sequence is that of Cytidine deaminase from Escherichia coli O17:K52:H18 (strain UMN026 / ExPEC).